A 382-amino-acid chain; its full sequence is Chaperone protein DnaJ (382 aa).

Residues 4–69 form the J domain; that stretch reads DYYEVLGVSR…DKRRRYDQFG (66 aa). The CR-type zinc-finger motif lies at 138-219; that stretch reads GVEKTIKIKK…CYGEGIKQGE (82 aa). Residues cysteine 151, cysteine 154, cysteine 167, cysteine 170, cysteine 193, cysteine 196, cysteine 207, and cysteine 210 each contribute to the Zn(2+) site. CXXCXGXG motif repeat units follow at residues 151 to 158, 167 to 174, 193 to 200, and 207 to 214; these read CKECNGSG, CPTCHGAG, CPTCGGEG, and CPSCYGEG.

The protein belongs to the DnaJ family. As to quaternary structure, homodimer. It depends on Zn(2+) as a cofactor.

It is found in the cytoplasm. Functionally, participates actively in the response to hyperosmotic and heat shock by preventing the aggregation of stress-denatured proteins and by disaggregating proteins, also in an autonomous, DnaK-independent fashion. Unfolded proteins bind initially to DnaJ; upon interaction with the DnaJ-bound protein, DnaK hydrolyzes its bound ATP, resulting in the formation of a stable complex. GrpE releases ADP from DnaK; ATP binding to DnaK triggers the release of the substrate protein, thus completing the reaction cycle. Several rounds of ATP-dependent interactions between DnaJ, DnaK and GrpE are required for fully efficient folding. Also involved, together with DnaK and GrpE, in the DNA replication of plasmids through activation of initiation proteins. The sequence is that of Chaperone protein DnaJ from Chlorobium luteolum (strain DSM 273 / BCRC 81028 / 2530) (Pelodictyon luteolum).